We begin with the raw amino-acid sequence, 254 residues long: Coproheme decarboxylase (254 aa).

Fe-coproporphyrin III is bound by residues Arg136, 150–154, His177, Gln190, and Ser228; that span reads YPMDK. Tyr150 is a catalytic residue.

The protein belongs to the ChdC family. Type 1 subfamily. The cofactor is Fe-coproporphyrin III.

It catalyses the reaction Fe-coproporphyrin III + 2 H2O2 + 2 H(+) = heme b + 2 CO2 + 4 H2O. It carries out the reaction Fe-coproporphyrin III + H2O2 + H(+) = harderoheme III + CO2 + 2 H2O. The catalysed reaction is harderoheme III + H2O2 + H(+) = heme b + CO2 + 2 H2O. The protein operates within porphyrin-containing compound metabolism; protoheme biosynthesis. Its function is as follows. Involved in coproporphyrin-dependent heme b biosynthesis. Catalyzes the decarboxylation of Fe-coproporphyrin III (coproheme) to heme b (protoheme IX), the last step of the pathway. The reaction occurs in a stepwise manner with a three-propionate harderoheme intermediate. In Bacillus subtilis (strain 168), this protein is Coproheme decarboxylase.